Here is a 215-residue protein sequence, read N- to C-terminus: Cytochrome b6 (215 aa).

The helical transmembrane segment at 32–52 threads the bilayer; sequence IFYCLGGITLTCFLVQVATGF. Cysteine 35 contributes to the heme c binding site. Histidine 86 and histidine 100 together coordinate heme b. 3 helical membrane-spanning segments follow: residues 90-110, 116-136, and 186-206; these read ASMM…TGGF, LTWI…VTGY, and LHTF…FLMI. Positions 187 and 202 each coordinate heme b.

This sequence belongs to the cytochrome b family. PetB subfamily. The 4 large subunits of the cytochrome b6-f complex are cytochrome b6, subunit IV (17 kDa polypeptide, PetD), cytochrome f and the Rieske protein, while the 4 small subunits are PetG, PetL, PetM and PetN. The complex functions as a dimer. Heme b is required as a cofactor. Heme c serves as cofactor.

Its subcellular location is the plastid. The protein resides in the chloroplast thylakoid membrane. In terms of biological role, component of the cytochrome b6-f complex, which mediates electron transfer between photosystem II (PSII) and photosystem I (PSI), cyclic electron flow around PSI, and state transitions. This chain is Cytochrome b6, found in Psilotum nudum (Whisk fern).